We begin with the raw amino-acid sequence, 794 residues long: Phosphoenolpyruvate synthase (794 aa).

His422 acts as the Tele-phosphohistidine intermediate in catalysis. Residues Arg512, Arg579, Glu681, Gly702, Ser703, Asn704, and Asp705 each contribute to the substrate site. Glu681 provides a ligand contact to Mg(2+). Asp705 is a binding site for Mg(2+). Cys752 acts as the Proton donor in catalysis.

Belongs to the PEP-utilizing enzyme family. Mg(2+) serves as cofactor.

It catalyses the reaction pyruvate + ATP + H2O = phosphoenolpyruvate + AMP + phosphate + 2 H(+). It participates in carbohydrate biosynthesis; gluconeogenesis. In terms of biological role, catalyzes the phosphorylation of pyruvate to phosphoenolpyruvate. This Neisseria meningitidis serogroup B (strain ATCC BAA-335 / MC58) protein is Phosphoenolpyruvate synthase (ppsA).